The following is a 479-amino-acid chain: Aspartyl/glutamyl-tRNA(Asn/Gln) amidotransferase subunit B (479 aa).

This sequence belongs to the GatB/GatE family. GatB subfamily. Heterotrimer of A, B and C subunits.

It catalyses the reaction L-glutamyl-tRNA(Gln) + L-glutamine + ATP + H2O = L-glutaminyl-tRNA(Gln) + L-glutamate + ADP + phosphate + H(+). The enzyme catalyses L-aspartyl-tRNA(Asn) + L-glutamine + ATP + H2O = L-asparaginyl-tRNA(Asn) + L-glutamate + ADP + phosphate + 2 H(+). Its function is as follows. Allows the formation of correctly charged Asn-tRNA(Asn) or Gln-tRNA(Gln) through the transamidation of misacylated Asp-tRNA(Asn) or Glu-tRNA(Gln) in organisms which lack either or both of asparaginyl-tRNA or glutaminyl-tRNA synthetases. The reaction takes place in the presence of glutamine and ATP through an activated phospho-Asp-tRNA(Asn) or phospho-Glu-tRNA(Gln). This chain is Aspartyl/glutamyl-tRNA(Asn/Gln) amidotransferase subunit B, found in Streptococcus pyogenes serotype M3 (strain ATCC BAA-595 / MGAS315).